The primary structure comprises 107 residues: Phosphoribosyl-ATP pyrophosphatase (107 aa).

The protein belongs to the PRA-PH family.

The protein localises to the cytoplasm. The enzyme catalyses 1-(5-phospho-beta-D-ribosyl)-ATP + H2O = 1-(5-phospho-beta-D-ribosyl)-5'-AMP + diphosphate + H(+). It functions in the pathway amino-acid biosynthesis; L-histidine biosynthesis; L-histidine from 5-phospho-alpha-D-ribose 1-diphosphate: step 2/9. The chain is Phosphoribosyl-ATP pyrophosphatase from Novosphingobium aromaticivorans (strain ATCC 700278 / DSM 12444 / CCUG 56034 / CIP 105152 / NBRC 16084 / F199).